A 130-amino-acid polypeptide reads, in one-letter code: Small ribosomal subunit protein uS8 (130 aa).

Belongs to the universal ribosomal protein uS8 family. In terms of assembly, part of the 30S ribosomal subunit. Contacts proteins S5 and S12.

One of the primary rRNA binding proteins, it binds directly to 16S rRNA central domain where it helps coordinate assembly of the platform of the 30S subunit. In Pseudomonas fluorescens (strain Pf0-1), this protein is Small ribosomal subunit protein uS8.